The chain runs to 208 residues: Probable hydrolase YcaC (208 aa).

Cysteine 118 is a catalytic residue.

In terms of assembly, homooctamer composed of two tetrameric rings.

This chain is Probable hydrolase YcaC (ycaC), found in Escherichia coli (strain K12).